The following is a 380-amino-acid chain: Cytochrome b (380 aa).

The next 4 membrane-spanning stretches (helical) occupy residues 33 to 53, 77 to 98, 113 to 133, and 178 to 198; these read FGSL…FLAM, WLIR…FLHV, WNMG…GYVL, and FFAF…VHLL. 2 residues coordinate heme: His-83 and His-97. Residues His-182 and His-196 each coordinate heme. His-201 contacts a ubiquinone. The next 4 helical transmembrane spans lie at 226 to 246, 288 to 308, 320 to 340, and 347 to 367; these read VKDF…TLFF, LGGV…PLLH, ITQT…WIGG, and FIII…IFMP.

Belongs to the cytochrome b family. In terms of assembly, the cytochrome bc1 complex contains 11 subunits: 3 respiratory subunits (MT-CYB, CYC1 and UQCRFS1), 2 core proteins (UQCRC1 and UQCRC2) and 6 low-molecular weight proteins (UQCRH/QCR6, UQCRB/QCR7, UQCRQ/QCR8, UQCR10/QCR9, UQCR11/QCR10 and a cleavage product of UQCRFS1). This cytochrome bc1 complex then forms a dimer. The cofactor is heme.

The protein localises to the mitochondrion inner membrane. In terms of biological role, component of the ubiquinol-cytochrome c reductase complex (complex III or cytochrome b-c1 complex) that is part of the mitochondrial respiratory chain. The b-c1 complex mediates electron transfer from ubiquinol to cytochrome c. Contributes to the generation of a proton gradient across the mitochondrial membrane that is then used for ATP synthesis. The protein is Cytochrome b (MT-CYB) of Microtus arvalis (Common vole).